Reading from the N-terminus, the 700-residue chain is Tectonic-2 (700 aa).

The N-terminal stretch at 1–25 (MGSLSPLSLLWGLLLLQGVLRPLRG) is a signal peptide. Topologically, residues 26-665 (DPVFIPPFIR…YYQGEPQSQC (640 aa)) are extracellular. Residues Asn76, Asn82, Asn146, Asn156, and Asn389 are each glycosylated (N-linked (GlcNAc...) asparagine). Residues 666-682 (VAKGLMLLSLLMLAILL) traverse the membrane as a helical segment. Residues 683–700 (RHPWVRMCKARDSAAIYH) lie on the Cytoplasmic side of the membrane.

The protein belongs to the tectonic family. Part of the tectonic-like complex (also named B9 complex). As to expression, significant expression is observed in brain, kidney and eye.

It is found in the membrane. The protein localises to the cytoplasm. Its subcellular location is the cytoskeleton. It localises to the cilium basal body. Its function is as follows. Component of the tectonic-like complex, a complex localized at the transition zone of primary cilia and acting as a barrier that prevents diffusion of transmembrane proteins between the cilia and plasma membranes. Required for hedgehog signaling transduction. This is Tectonic-2 (Tctn2) from Mus musculus (Mouse).